The sequence spans 391 residues: 3-ketoacyl-CoA thiolase, peroxisomal (391 aa).

Cys-92 serves as the catalytic Acyl-thioester intermediate. Active-site proton acceptor residues include His-335 and Cys-366.

Belongs to the thiolase-like superfamily. Thiolase family. As to quaternary structure, homodimer.

It is found in the peroxisome. It carries out the reaction an acyl-CoA + acetyl-CoA = a 3-oxoacyl-CoA + CoA. The protein operates within lipid metabolism; fatty acid metabolism. The polypeptide is 3-ketoacyl-CoA thiolase, peroxisomal (FOX3) (Encephalitozoon cuniculi (strain GB-M1) (Microsporidian parasite)).